A 219-amino-acid polypeptide reads, in one-letter code: MTQMQQTILDAFNFRHATKRFDANKKISESDFNTILETGRLSPSSLGLEPWRFVVIQNREIRDKLKAISWGAQGQLDTASHFVLILARKNVTSQSDYVQHMIRNVKKYSEASIPATEKKFDDFQTNFHINDNDQSLLDWARKQTYIALGNMMTSAALLNIDSCPIEGFDLDAVTQFLTDDGIIDEAHFAPSVMVAFGYRETEPKDKVRQTQDDIVEWLE.

This sequence belongs to the nitroreductase family. It depends on FMN as a cofactor.

The polypeptide is Putative NAD(P)H nitroreductase SSP0379 (Staphylococcus saprophyticus subsp. saprophyticus (strain ATCC 15305 / DSM 20229 / NCIMB 8711 / NCTC 7292 / S-41)).